Consider the following 603-residue polypeptide: Probable GMP synthase [glutamine-hydrolyzing] (603 aa).

The 190-residue stretch at 6-195 folds into the Glutamine amidotransferase type-1 domain; it reads KIAVVDFGGQ…FIQICGVSKT (190 aa). Catalysis depends on cysteine 81, which acts as the Nucleophile. Residues histidine 170 and glutamate 172 contribute to the active site. Residues 196-392 enclose the GMPS ATP-PPase domain; it reads WGIDQFLKEK…LGLESEWVGR (197 aa). 224-230 serves as a coordination point for ATP; sequence SGGVDST.

Homodimer.

It catalyses the reaction XMP + L-glutamine + ATP + H2O = GMP + L-glutamate + AMP + diphosphate + 2 H(+). It functions in the pathway purine metabolism; GMP biosynthesis; GMP from XMP (L-Gln route): step 1/1. Catalyzes the synthesis of GMP from XMP. The sequence is that of Probable GMP synthase [glutamine-hydrolyzing] (guaA) from Leptospira interrogans serogroup Icterohaemorrhagiae serovar copenhageni (strain Fiocruz L1-130).